Reading from the N-terminus, the 37-residue chain is KCNTATCATQRLANFLVHSNNNLGPVLSPTNVGSNTY.

A disulfide bridge connects residues Cys2 and Cys7. Tyr37 is modified (tyrosine amide).

The protein belongs to the calcitonin family. Can form homodimers. Interacts with IDE and INS. Interaction with INS inhibits homodimerization and fibril formation.

The protein localises to the secreted. In terms of biological role, amylin/IAPP is a glucoregulatory peptide hormone that plays an important role in the regulation of energy homeostasis. Selectively inhibits insulin-stimulated glucose utilization and glycogen deposition in muscle, while not affecting adipocyte glucose metabolism. IAPP function is mediated by the CALCR-RAMPs (AMYRs) receptor complexes. Amylin can also bind CALCR receptor in the absence of RAMPs, although it is more selective for AMYRs. In Cricetulus griseus (Chinese hamster), this protein is Islet amyloid polypeptide (IAPP).